Here is a 131-residue protein sequence, read N- to C-terminus: Small ribosomal subunit protein uS8 (131 aa).

The protein belongs to the universal ribosomal protein uS8 family. Part of the 30S ribosomal subunit. Contacts proteins S5 and S12.

One of the primary rRNA binding proteins, it binds directly to 16S rRNA central domain where it helps coordinate assembly of the platform of the 30S subunit. This Nitrosomonas eutropha (strain DSM 101675 / C91 / Nm57) protein is Small ribosomal subunit protein uS8.